The chain runs to 117 residues: Immunoglobulin heavy variable 5-10-1 (117 aa).

The N-terminal stretch at 1–19 is a signal peptide; sequence MGSTAILALLLAVLQGVCA. A framework-1 region spans residues 20–44; the sequence is EVQLVQSGAEVKKPGESLRISCKGS. Positions 20–117 constitute an Ig-like domain; it reads EVQLVQSGAE…SDTAMYYCAR (98 aa). A disulfide bridge connects residues Cys-41 and Cys-115. The interval 45 to 52 is complementarity-determining-1; that stretch reads GYSFTSYW. Positions 53 to 69 are framework-2; it reads ISWVRQMPGKGLEWMGR. Residues 70–77 are complementarity-determining-2; the sequence is IDPSDSYT. The segment at 78–115 is framework-3; sequence NYSPSFQGHVTISADKSISTAYLQWSSLKASDTAMYYC. A complementarity-determining-3 region spans residues 116 to 117; sequence AR.

As to quaternary structure, immunoglobulins are composed of two identical heavy chains and two identical light chains; disulfide-linked.

The protein resides in the secreted. The protein localises to the cell membrane. In terms of biological role, v region of the variable domain of immunoglobulin heavy chains that participates in the antigen recognition. Immunoglobulins, also known as antibodies, are membrane-bound or secreted glycoproteins produced by B lymphocytes. In the recognition phase of humoral immunity, the membrane-bound immunoglobulins serve as receptors which, upon binding of a specific antigen, trigger the clonal expansion and differentiation of B lymphocytes into immunoglobulins-secreting plasma cells. Secreted immunoglobulins mediate the effector phase of humoral immunity, which results in the elimination of bound antigens. The antigen binding site is formed by the variable domain of one heavy chain, together with that of its associated light chain. Thus, each immunoglobulin has two antigen binding sites with remarkable affinity for a particular antigen. The variable domains are assembled by a process called V-(D)-J rearrangement and can then be subjected to somatic hypermutations which, after exposure to antigen and selection, allow affinity maturation for a particular antigen. The protein is Immunoglobulin heavy variable 5-10-1 of Homo sapiens (Human).